A 345-amino-acid chain; its full sequence is NADPH-dependent oxidoreductase 2-alkenal reductase (345 aa).

Residues 52–53 (PY), 163–169 (AASGAVG), G188, K192, Y208, N232, C254, Y260, 284–286 (FVV), F330, and 334–336 (NVG) each bind NADP(+). Residue Y53 coordinates substrate. Y260 contacts substrate.

This sequence belongs to the NADP-dependent oxidoreductase L4BD family. In terms of assembly, homodimer. As to expression, expressed in leaves.

The protein resides in the cytoplasm. It is found in the nucleus. The protein localises to the nucleoplasm. The catalysed reaction is an n-alkanal + NAD(+) = an alk-2-enal + NADH + H(+). It catalyses the reaction an n-alkanal + NADP(+) = an alk-2-enal + NADPH + H(+). With respect to regulation, inhibited by N-ethylmaleimide and p-chloromercuribenzoic acid. Its function is as follows. Involved in the detoxification of reactive carbonyls. Acts on lipid peroxide-derived reactive aldehydes. Specific to a double bond activated by an adjacent carbonyl group. Can use both quinones and diamide as substrates, but not menadione, ferricyanide or phylloquinone. Can use 4-hydroxy-(2E)-nonenal (HNE), 4-hydroxy-(2E)-hexenal (HHE), (2E)-nonenal, (2E)-hexenal, (2E)-pentenal, propenal (acrolein), 3-buten-2-one and 3-penten-2-one, but not (R)-(-)-carvone, n-nonanal, n-hexanal, (3Z)-hexanal, cyclohex-2-en-1-one or 12-oxo phytodienoic acid (OPDA) as electron acceptors. Catalyzes the reduction of the alpha,beta-unsaturated bond of 2-alkenals, of lipid peroxide-derived oxenes 9-oxo-10(E),12(Z)-octadecadienoic acid (9-KODE) and 13-oxo-9(Z),11(E)-octadecadienoic acid (13-KODE), as well as 4-oxo-(2E)-nonenal and 4-hydroxynonenal. Can use 12-oxo-10(E) dodecanoate (traumatin), trans-1,3 diphenyl-2-propenone, trans-1,4-diphenyl-2-butene-1,4-dione, 9-oxo-12,13-epoxy-(10E)-octadecenoic acid (trans-EKODE-1b) and 9,13-dihydroxy-10-oxo-11-octadecenoic acid as substrates. Catalyzes the reduction of the 7-8 double bond of phenylpropanal substrates, such as p-coumaryl aldehyde and coniferyl aldehyde (in vitro). Has activity towards toxic substrates, such as 4-hydroxy-(2E)-nonenal (in vitro). May play a distinct role in plant antioxidant defense and is possibly involved in NAD(P)/NAD(P)H homeostasis. The protein is NADPH-dependent oxidoreductase 2-alkenal reductase of Arabidopsis thaliana (Mouse-ear cress).